The sequence spans 418 residues: Protein YdhQ (418 aa).

This chain is Protein YdhQ (ydhQ), found in Escherichia coli (strain K12).